A 226-amino-acid polypeptide reads, in one-letter code: UPF0758 protein GK2618 (226 aa).

An MPN domain is found at 104–226 (VIRCPEDGAK…FISLKEKGYV (123 aa)). H175, H177, and D188 together coordinate Zn(2+). Positions 175-188 (HNHPSGDPTPSRED) match the JAMM motif motif.

It belongs to the UPF0758 family.

This Geobacillus kaustophilus (strain HTA426) protein is UPF0758 protein GK2618.